The following is a 160-amino-acid chain: Cytochrome c-type biogenesis protein CcmE (160 aa).

The Cytoplasmic portion of the chain corresponds to 1 to 7 (MTRKQRR). The helical; Signal-anchor for type II membrane protein transmembrane segment at 8–28 (ATFIAVSLGILALAVGLVLYA) threads the bilayer. The Periplasmic portion of the chain corresponds to 29 to 160 (MRDSIVYFYS…SETYGQGSYP (132 aa)). Residues His-122 and Tyr-126 each contribute to the heme site. Residues 141–160 (WQGEGAEAPHSETYGQGSYP) form a disordered region.

This sequence belongs to the CcmE/CycJ family.

Its subcellular location is the cell inner membrane. Its function is as follows. Heme chaperone required for the biogenesis of c-type cytochromes. Transiently binds heme delivered by CcmC and transfers the heme to apo-cytochromes in a process facilitated by CcmF and CcmH. The sequence is that of Cytochrome c-type biogenesis protein CcmE from Parvibaculum lavamentivorans (strain DS-1 / DSM 13023 / NCIMB 13966).